A 470-amino-acid polypeptide reads, in one-letter code: MAANGKVVSEMIAWIKSQKLIAPRMKDAPTFYRNLEEALDVRRSTQSLMTRGQSTWKTGDAIDFCSNDLLSLGLTGELRREFLAELARHPDFSLHSGGSRVMGGNYDYIEAVEQEIADFLGAETALMFNSGSNGNIAIYTAIPRPGDAIVYDELVHFSTHTGMAASLATTKVAFRHNDLDAFREAMSSTMDSHPMLQDGSRSILVSVESVYSMDGDVCPLVEMLEIAREICPKGNFAFIADEAHATGVVGPRGVGLVKLLGLENEVAIRLNTCGKALACTGSVVLGNATVRNMLLNYAGSLVNTTAPSFPSVAVIRAAYNLMRTGATQKAQDNIQHLVKYFFESITSSNIWDKATDLGILSIPVAEDYESLDFVTHIVPIWTRQKYNWWLFFHLQLAKIAVVPIDYPQVPKGKSRVRVMIHAGNTEEQVDYLVATLCDFANEMIDIEEGGEKGKIPKAAQEIYALMAAHA.

3 residues coordinate pyridoxal 5'-phosphate: serine 212, histidine 244, and threonine 272. Residue lysine 275 is modified to N6-(pyridoxal phosphate)lysine.

Belongs to the class-II pyridoxal-phosphate-dependent aminotransferase family. BioF subfamily. Homodimer. Pyridoxal 5'-phosphate is required as a cofactor.

The catalysed reaction is aminomalonate + (3R)-hydroxyoctadeca-4,10-dienoyl-[ACP] = 3-oxopresphingofungin + holo-[ACP] + CO2. The protein operates within secondary metabolite biosynthesis. In terms of biological role, aminoacyl transferase; part of the gene cluster that mediates the biosynthesis of sphingofungins, bioactive molecules acting as sphingolipid inhibitors via inhibiting serine palmitoyl transferase (SPT). Within the pathway, sphA transfers aminomalonate onto the sphB product 3-hydroxyoctadeca-4,10-dienoyl-ACP to produce 3-keto-presphingofungin. The substrate specificity of sphA using only aminomalonate in Aspergillus fumigatus is responsible for the biosynthesis of sphingofungins B and C but not E and F like in Byssochlamys spectabilis. The PKS sphB does not contain any putative thioesterase domain for releasing the nascent polyketide chain and it has been suggested that aminoacyl transferases can facilitate the polyketide chain release. Sphingofungin biosynthesis starts with the PKS sphB that produces an C18 polyketide precursor 3-hydroxyoctadeca-4,10-dienoyl-ACP containing one delta-6 desaturation and one delta-12 desaturation. The aminoacyl transferase sphA uses the sphB product to produce 3-keto-presphingofungin by adding an aminomalonate molecule. SphF then reduces the C-3 ketone of 3-keto-presphingofungin which leads to presphingofungin. The cytochrome P450 monooxygenase sphH converts presphingofungin into sphingofungin B1 which is further converted to sphingofungin B by the dioxygenase sphC. SphC is also able to convert presphingofungin into sphingofungin B2. The acetyltransferase sphE acetylates sphingofungin B to produce sphingofungin C, but can also convert sphingofungin B1 into sphingofungin C1 and sphingofungin B2 into sphingofungin C2. Finally, sphingofungin C can be spontaneously converted into sphingofungin D. This Aspergillus fumigatus (strain CBS 144.89 / FGSC A1163 / CEA10) (Neosartorya fumigata) protein is Aminoacyl transferase sphA.